Here is a 221-residue protein sequence, read N- to C-terminus: Oligoribonuclease (221 aa).

The Exonuclease domain occupies 21–186 (LVWVDLEMTG…ADIVESIREL (166 aa)). Tyr143 is a catalytic residue.

It belongs to the oligoribonuclease family.

The protein localises to the cytoplasm. Its function is as follows. 3'-to-5' exoribonuclease specific for small oligoribonucleotides. In Corynebacterium efficiens (strain DSM 44549 / YS-314 / AJ 12310 / JCM 11189 / NBRC 100395), this protein is Oligoribonuclease.